Consider the following 243-residue polypeptide: 2-C-methyl-D-erythritol 4-phosphate cytidylyltransferase (243 aa).

The protein belongs to the IspD/TarI cytidylyltransferase family. IspD subfamily.

It carries out the reaction 2-C-methyl-D-erythritol 4-phosphate + CTP + H(+) = 4-CDP-2-C-methyl-D-erythritol + diphosphate. It functions in the pathway isoprenoid biosynthesis; isopentenyl diphosphate biosynthesis via DXP pathway; isopentenyl diphosphate from 1-deoxy-D-xylulose 5-phosphate: step 2/6. In terms of biological role, catalyzes the formation of 4-diphosphocytidyl-2-C-methyl-D-erythritol from CTP and 2-C-methyl-D-erythritol 4-phosphate (MEP). This Colwellia psychrerythraea (strain 34H / ATCC BAA-681) (Vibrio psychroerythus) protein is 2-C-methyl-D-erythritol 4-phosphate cytidylyltransferase.